The following is a 331-amino-acid chain: Biotin synthase (331 aa).

The 226-residue stretch at 39 to 264 (SELQTCYLVS…VFPQSMVRLA (226 aa)) folds into the Radical SAM core domain. Residues Cys54, Cys58, and Cys61 each coordinate [4Fe-4S] cluster. Positions 98, 130, 190, and 262 each coordinate [2Fe-2S] cluster.

The protein belongs to the radical SAM superfamily. Biotin synthase family. As to quaternary structure, homodimer. [4Fe-4S] cluster is required as a cofactor. Requires [2Fe-2S] cluster as cofactor.

It carries out the reaction (4R,5S)-dethiobiotin + (sulfur carrier)-SH + 2 reduced [2Fe-2S]-[ferredoxin] + 2 S-adenosyl-L-methionine = (sulfur carrier)-H + biotin + 2 5'-deoxyadenosine + 2 L-methionine + 2 oxidized [2Fe-2S]-[ferredoxin]. It participates in cofactor biosynthesis; biotin biosynthesis; biotin from 7,8-diaminononanoate: step 2/2. Catalyzes the conversion of dethiobiotin (DTB) to biotin by the insertion of a sulfur atom into dethiobiotin via a radical-based mechanism. This Chlamydia abortus (strain DSM 27085 / S26/3) (Chlamydophila abortus) protein is Biotin synthase.